We begin with the raw amino-acid sequence, 474 residues long: Ribulose bisphosphate carboxylase large chain (474 aa).

Residues asparagine 122 and threonine 172 each contribute to the substrate site. Residue lysine 174 is the Proton acceptor of the active site. Lysine 176 contacts substrate. Mg(2+) contacts are provided by lysine 200, aspartate 202, and glutamate 203. N6-carboxylysine is present on lysine 200. Catalysis depends on histidine 293, which acts as the Proton acceptor. Substrate-binding residues include arginine 294, histidine 326, and serine 378.

Belongs to the RuBisCO large chain family. Type I subfamily. As to quaternary structure, heterohexadecamer of 8 large chains and 8 small chains; disulfide-linked. The disulfide link is formed within the large subunit homodimers. The cofactor is Mg(2+). In terms of processing, the disulfide bond which can form in the large chain dimeric partners within the hexadecamer appears to be associated with oxidative stress and protein turnover.

Its subcellular location is the carboxysome. The catalysed reaction is 2 (2R)-3-phosphoglycerate + 2 H(+) = D-ribulose 1,5-bisphosphate + CO2 + H2O. It carries out the reaction D-ribulose 1,5-bisphosphate + O2 = 2-phosphoglycolate + (2R)-3-phosphoglycerate + 2 H(+). Its function is as follows. RuBisCO catalyzes two reactions: the carboxylation of D-ribulose 1,5-bisphosphate, the primary event in carbon dioxide fixation, as well as the oxidative fragmentation of the pentose substrate in the photorespiration process. Both reactions occur simultaneously and in competition at the same active site. This chain is Ribulose bisphosphate carboxylase large chain, found in Synechococcus sp. (strain JA-2-3B'a(2-13)) (Cyanobacteria bacterium Yellowstone B-Prime).